A 445-amino-acid chain; its full sequence is MGITVLKNEGLDFHARISTPLSEIDDDIQKELLDLTKKVKIAGFRAGKVPVSIVKQKYGTSVRNDVIERRINHSVNHVIKKHNLSIIGRPKIEALQNEPDKALAFTVKIELLPKVTIPDLKKISLDRPKLEVNAKDVEEQLEKLAALTKSYTKESKAKIKDGDQVTIDAIGYIKDEAFEGGQLNDLKVVIGSNALIPSFEKQLIGSKTGSEVDVNVTFPENYHSKDLAGKEARFAVQIKAVHTAEPTVIDDEFAKKFQSNSLEELRTHFAKQIENESEEAINTIMKMNLFDQLEKLLDFDVPASLLEQEKNILKSETDKNNQDESLLKDKSPKEITEYYNKVALRRVRIGLLLAEYAKSKNLQLEPDDLRKVIMQRARNFPGQENMIFDFYKNNPSAIEGLKGPALEDKAVQYIFNNEIKLKEKKYTKEELEKYLEAEEQRITLI.

The 86-residue stretch at 162-247 (GDQVTIDAIG…IKAVHTAEPT (86 aa)) folds into the PPIase FKBP-type domain.

This sequence belongs to the FKBP-type PPIase family. Tig subfamily.

Its subcellular location is the cytoplasm. The catalysed reaction is [protein]-peptidylproline (omega=180) = [protein]-peptidylproline (omega=0). Its function is as follows. Involved in protein export. Acts as a chaperone by maintaining the newly synthesized protein in an open conformation. Functions as a peptidyl-prolyl cis-trans isomerase. In Rickettsia akari (strain Hartford), this protein is Trigger factor.